A 104-amino-acid chain; its full sequence is Ycf49-like protein (104 aa).

3 consecutive transmembrane segments (helical) span residues 6–26 (IPTWMVHVSSVIEWIVAIALV), 41–61 (LAWGMVPALVSATCACTWHFF), and 73–93 (LQALTTVIGNITLCLAAWWIY).

It belongs to the ycf49 family.

It is found in the cell membrane. The polypeptide is Ycf49-like protein (Synechocystis sp. (strain ATCC 27184 / PCC 6803 / Kazusa)).